The following is a 308-amino-acid chain: MPTLIVLIGPTGVGKTELSLRLAENFHTSIVSADSRQLYAELKIGTAAPTPDQLKRVPHYLVGTLHLTDYYSAAQYEQEAMEILHQLFTEHEVVVLTGGSMMYVDAICKGIDDIPTVDAETRQVMLQKYEEEGLEQLCAELRLLDPDYYRIVDLKNPKRVIHALEICYMTGKTYTSFRTQQKKERPFRILKIGLTRDREELYDRINRRVDQMMEEGLLDEVRSVLSYRHLNSLNTVGYKELFKYLDGEWELPFAIEKIKQNSRIYSRKQMTWFKRDEEIRWFHPEQETEILEYLRLQNLTHLPSLDTF.

Residue 9 to 16 (GPTGVGKT) coordinates ATP. Substrate is bound at residue 11-16 (TGVGKT). The interval 34–37 (DSRQ) is interaction with substrate tRNA.

It belongs to the IPP transferase family. As to quaternary structure, monomer. It depends on Mg(2+) as a cofactor.

The enzyme catalyses adenosine(37) in tRNA + dimethylallyl diphosphate = N(6)-dimethylallyladenosine(37) in tRNA + diphosphate. Functionally, catalyzes the transfer of a dimethylallyl group onto the adenine at position 37 in tRNAs that read codons beginning with uridine, leading to the formation of N6-(dimethylallyl)adenosine (i(6)A). This chain is tRNA dimethylallyltransferase 1, found in Bacteroides thetaiotaomicron (strain ATCC 29148 / DSM 2079 / JCM 5827 / CCUG 10774 / NCTC 10582 / VPI-5482 / E50).